The following is a 395-amino-acid chain: MNHLESKFGQFGGMYVPELLIPALDQLEQAFIDAQNDPEFQKEFMELLTDYAGRPTAMTLSRNLVSNPNVKLYLKREDLLHGGAHKTNQVLGQALLTKRMGKTEVIAETGAGQHGVATALACALLGLKARIYMGAKDVERQAPNVFRMRLMGAEVIPVNAGSGTLKDAVNEAMRDWSATYDKAHYLLGTAAGPHPFPTIVREFHRMIGEETRAQIMAKEGRLPDAVVACVGGGSNAIGMFADFIDEPSVQLIGVEPAGKGLHTAEHGAAIGKGTTGILHGAYSYIMQDEDGQIEESYSVSAGLDYPAVGPQHAHLHDIGRATYAAVTDDEALYAFQLLSRKEGIIPALESSHALAHALNMADEAEDGTIIVVNLSGRGDKDLAHVHSILGGQTNE.

Residue Lys-86 is modified to N6-(pyridoxal phosphate)lysine.

It belongs to the TrpB family. In terms of assembly, tetramer of two alpha and two beta chains. It depends on pyridoxal 5'-phosphate as a cofactor.

The catalysed reaction is (1S,2R)-1-C-(indol-3-yl)glycerol 3-phosphate + L-serine = D-glyceraldehyde 3-phosphate + L-tryptophan + H2O. The protein operates within amino-acid biosynthesis; L-tryptophan biosynthesis; L-tryptophan from chorismate: step 5/5. Its function is as follows. The beta subunit is responsible for the synthesis of L-tryptophan from indole and L-serine. The sequence is that of Tryptophan synthase beta chain from Pseudoalteromonas atlantica (strain T6c / ATCC BAA-1087).